Here is a 407-residue protein sequence, read N- to C-terminus: D-galactonate dehydratase family member Pjdr2_1176 (407 aa).

D208 contacts Mg(2+). Residue H210 coordinates D-arabinonate. Mg(2+) contacts are provided by E234 and E260. Residues E260, R281, and E337 each coordinate D-arabinonate.

This sequence belongs to the mandelate racemase/muconate lactonizing enzyme family. GalD subfamily.

In terms of biological role, has no detectable activity with D-mannonate and with a panel of 70 other acid sugars (in vitro), in spite of the conservation of the residues that are expected to be important for catalytic activity and cofactor binding. May have evolved a divergent function. This Paenibacillus sp. (strain JDR-2) protein is D-galactonate dehydratase family member Pjdr2_1176.